Consider the following 105-residue polypeptide: UPF0145 protein VP1283 (105 aa).

This sequence belongs to the UPF0145 family.

In Vibrio parahaemolyticus serotype O3:K6 (strain RIMD 2210633), this protein is UPF0145 protein VP1283.